The primary structure comprises 780 residues: Gelsolin (780 aa).

The N-terminal stretch at 1–25 (MAPYCSSLRSALLVLALCALSPSHA) is a signal peptide. Residues 28-48 (ASRGRAQERAPQSRVSETRPS) are disordered. Residues 51–174 (VVEHPEFLKA…YKKGGVASGF (124 aa)) are actin-severing. One copy of the Gelsolin-like 1 repeat lies at 74–155 (FDLVPVPPNL…EVQGFESSTF (82 aa)). The residue at position 84 (tyrosine 84) is a Phosphotyrosine. Ca(2+)-binding residues include glycine 90, aspartate 91, glutamate 122, aspartate 134, glycine 139, and alanine 141. An actin-actin interfilament contact point region spans residues 121–124 (DESG). 160–167 (KSGLKYKK) is a binding site for a 1,2-diacyl-sn-glycero-3-phospho-(1D-myo-inositol-4,5-bisphosphate). Valine 170 is a Ca(2+) binding site. An a 1,2-diacyl-sn-glycero-3-phospho-(1D-myo-inositol-4,5-bisphosphate)-binding site is contributed by 186–194 (RLFQVKGRR). The stretch at 196-268 (VRATEVPVSW…SEEGSEPEAM (73 aa)) is one Gelsolin-like 2 repeat. Ca(2+) is bound by residues glycine 211 and aspartate 212. An intrachain disulfide couples cysteine 213 to cysteine 226. Residues glutamate 234, aspartate 284, glutamate 327, aspartate 328, and glutamate 352 each coordinate Ca(2+). Residues 244-286 (GIRDNERSGRAQVHVSEEGSEPEAMLQVLGPKPDLPQGTEDTA) form a disordered region. One copy of the Gelsolin-like 3 repeat lies at 315–387 (DENPFAQSAL…LPEGGETPLF (73 aa)). Residues tyrosine 407 and tyrosine 463 each carry the phosphotyrosine modification. The actin-binding, Ca-sensitive stretch occupies residues 432–780 (AAQHGMDDDG…LDRALAELAA (349 aa)). The stretch at 453-534 (SNKVLVDPAT…VQGKEPAHLM (82 aa)) is one Gelsolin-like 4 repeat. Residues glycine 469, aspartate 470, glutamate 500, aspartate 512, glycine 517, proline 519, and threonine 549 each coordinate Ca(2+). A Gelsolin-like 5 repeat occupies 576–640 (AVEVMPKAGA…EEGSEPDGFW (65 aa)). Lysine 582 carries the post-translational modification N6-acetyllysine. Residues asparagine 589 and aspartate 590 each contribute to the Ca(2+) site. Phosphotyrosine is present on tyrosine 601. Glutamate 612 contacts Ca(2+). Tyrosine 649 bears the Phosphotyrosine mark. The Gelsolin-like 6 repeat unit spans residues 679–754 (IEEVPGELMQ…VRQGFEPPSF (76 aa)). The Ca(2+) site is built by aspartate 694, aspartate 695, and glutamate 717. Threonine 740 carries the phosphothreonine modification.

Belongs to the villin/gelsolin family. In terms of assembly, binds to actin and to fibronectin. Identified in a complex composed of ACTA1, COBL, GSN and TMSB4X. Interacts with the inactive form of EIF2AK2/PKR. Interacts with FLII. Post-translationally, phosphorylated on tyrosine residues in vitro.

Its subcellular location is the secreted. The protein localises to the cytoplasm. It is found in the cytoskeleton. Calcium-regulated, actin-modulating protein that binds to the plus (or barbed) ends of actin monomers or filaments, preventing monomer exchange (end-blocking or capping). It can promote the assembly of monomers into filaments (nucleation) as well as sever filaments already formed. Plays a role in ciliogenesis. In Rattus norvegicus (Rat), this protein is Gelsolin (Gsn).